A 405-amino-acid polypeptide reads, in one-letter code: Probable tRNA sulfurtransferase (405 aa).

Residues 60–165 form the THUMP domain; that stretch reads ETIDQRLKLV…QDAIYISNQL (106 aa). Residues 183 to 184, 208 to 209, Arg-265, Gly-287, and Gln-296 each bind ATP; these read ML and HF.

This sequence belongs to the ThiI family.

The protein localises to the cytoplasm. It carries out the reaction [ThiI sulfur-carrier protein]-S-sulfanyl-L-cysteine + a uridine in tRNA + 2 reduced [2Fe-2S]-[ferredoxin] + ATP + H(+) = [ThiI sulfur-carrier protein]-L-cysteine + a 4-thiouridine in tRNA + 2 oxidized [2Fe-2S]-[ferredoxin] + AMP + diphosphate. It catalyses the reaction [ThiS sulfur-carrier protein]-C-terminal Gly-Gly-AMP + S-sulfanyl-L-cysteinyl-[cysteine desulfurase] + AH2 = [ThiS sulfur-carrier protein]-C-terminal-Gly-aminoethanethioate + L-cysteinyl-[cysteine desulfurase] + A + AMP + 2 H(+). It participates in cofactor biosynthesis; thiamine diphosphate biosynthesis. Catalyzes the ATP-dependent transfer of a sulfur to tRNA to produce 4-thiouridine in position 8 of tRNAs, which functions as a near-UV photosensor. Also catalyzes the transfer of sulfur to the sulfur carrier protein ThiS, forming ThiS-thiocarboxylate. This is a step in the synthesis of thiazole, in the thiamine biosynthesis pathway. The sulfur is donated as persulfide by IscS. In Lactobacillus johnsonii (strain CNCM I-12250 / La1 / NCC 533), this protein is Probable tRNA sulfurtransferase.